Here is a 542-residue protein sequence, read N- to C-terminus: Glucose-6-phosphate isomerase (542 aa).

The active-site Proton donor is Glu353. Catalysis depends on residues His384 and Lys508.

It belongs to the GPI family.

It localises to the cytoplasm. It carries out the reaction alpha-D-glucose 6-phosphate = beta-D-fructose 6-phosphate. Its pathway is carbohydrate biosynthesis; gluconeogenesis. The protein operates within carbohydrate degradation; glycolysis; D-glyceraldehyde 3-phosphate and glycerone phosphate from D-glucose: step 2/4. Functionally, catalyzes the reversible isomerization of glucose-6-phosphate to fructose-6-phosphate. The protein is Glucose-6-phosphate isomerase of Corynebacterium efficiens (strain DSM 44549 / YS-314 / AJ 12310 / JCM 11189 / NBRC 100395).